Here is a 312-residue protein sequence, read N- to C-terminus: Olfactory receptor 4K17 (312 aa).

Over methionine 1–phenylalanine 25 the chain is Extracellular. N-linked (GlcNAc...) asparagine glycosylation occurs at asparagine 5. The chain crosses the membrane as a helical span at residues leucine 26–valine 49. Over phenylalanine 50 to threonine 57 the chain is Cytoplasmic. Residues proline 58–proline 79 traverse the membrane as a helical segment. Over lysine 80–glutamine 100 the chain is Extracellular. A disulfide bridge connects residues cysteine 97 and cysteine 189. A helical membrane pass occupies residues isoleucine 101–phenylalanine 120. The Cytoplasmic portion of the chain corresponds to aspartate 121–lysine 139. The chain crosses the membrane as a helical span at residues valine 140–phenylalanine 158. Over glutamine 159–valine 195 the chain is Extracellular. Residues glutamine 196–serine 219 traverse the membrane as a helical segment. Residues leucine 220 to lysine 235 are Cytoplasmic-facing. Residues alanine 236–tyrosine 258 traverse the membrane as a helical segment. Topologically, residues isoleucine 259–lysine 269 are extracellular. N-linked (GlcNAc...) asparagine glycosylation is present at asparagine 264. Residues phenylalanine 270–leucine 289 form a helical membrane-spanning segment. Over arginine 290 to threonine 312 the chain is Cytoplasmic.

The protein belongs to the G-protein coupled receptor 1 family.

Its subcellular location is the cell membrane. Functionally, odorant receptor. This chain is Olfactory receptor 4K17 (OR4K17), found in Homo sapiens (Human).